The primary structure comprises 372 residues: Chorismate synthase (372 aa).

NADP(+)-binding residues include R48 and R54. FMN-binding positions include 125-127, 238-239, G278, 293-297, and R319; these read RSS, NA, and KPTSS.

Belongs to the chorismate synthase family. As to quaternary structure, homotetramer. FMNH2 is required as a cofactor.

The enzyme catalyses 5-O-(1-carboxyvinyl)-3-phosphoshikimate = chorismate + phosphate. It participates in metabolic intermediate biosynthesis; chorismate biosynthesis; chorismate from D-erythrose 4-phosphate and phosphoenolpyruvate: step 7/7. In terms of biological role, catalyzes the anti-1,4-elimination of the C-3 phosphate and the C-6 proR hydrogen from 5-enolpyruvylshikimate-3-phosphate (EPSP) to yield chorismate, which is the branch point compound that serves as the starting substrate for the three terminal pathways of aromatic amino acid biosynthesis. This reaction introduces a second double bond into the aromatic ring system. This chain is Chorismate synthase, found in Xylella fastidiosa (strain 9a5c).